We begin with the raw amino-acid sequence, 135 residues long: Endoribonuclease YbeY (135 aa).

Residues histidine 94, histidine 98, and histidine 104 each coordinate Zn(2+).

The protein belongs to the endoribonuclease YbeY family. The cofactor is Zn(2+).

It is found in the cytoplasm. In terms of biological role, single strand-specific metallo-endoribonuclease involved in late-stage 70S ribosome quality control and in maturation of the 3' terminus of the 16S rRNA. This Campylobacter jejuni subsp. jejuni serotype O:2 (strain ATCC 700819 / NCTC 11168) protein is Endoribonuclease YbeY.